Consider the following 360-residue polypeptide: MIIYATVVQTINSFVRLESLKEVYGLIWIFVPIFSLVLGIITGVLVIVWLEREISAGIQQRIGPEYAGPLGILQALADGTKLLFKENLRPSRGNTPLFSIGPSIAVISILLSYSVIPFSNHLVLADLNIGIFLWIAISSIAPIGLLMSGYGSNNKYSFLGGLRAAAQSISYEIPLTLCVLSISLLSNSLSTVDIVEAQSKYGFWGWNLWRQPIGFIIFLISSLAECERLPFDLPEAEEELIAGYQTEYSGIKFGLFYVASYLNLLISSLFVTVLYLGGWNISIPYISILELFQRDQIFGTTICIFITLAKTYLFLFISIATRWTLPRLRMDQLLNLGWKFLLPISLGNLLLTTSFQLFSL.

The next 9 helical transmembrane spans lie at 27 to 47 (IWIF…VLVI), 98 to 118 (FSIG…VIPF), 129 to 149 (IGIF…LMSG), 165 to 185 (AAQS…ISLL), 203 to 223 (FWGW…ISSL), 248 to 268 (YSGI…LISS), 269 to 289 (LFVT…ISIL), 297 to 317 (IFGT…FLFI), and 340 to 360 (FLLP…LFSL).

Belongs to the complex I subunit 1 family. NDH is composed of at least 16 different subunits, 5 of which are encoded in the nucleus.

Its subcellular location is the plastid. It is found in the chloroplast thylakoid membrane. The catalysed reaction is a plastoquinone + NADH + (n+1) H(+)(in) = a plastoquinol + NAD(+) + n H(+)(out). It carries out the reaction a plastoquinone + NADPH + (n+1) H(+)(in) = a plastoquinol + NADP(+) + n H(+)(out). In terms of biological role, NDH shuttles electrons from NAD(P)H:plastoquinone, via FMN and iron-sulfur (Fe-S) centers, to quinones in the photosynthetic chain and possibly in a chloroplast respiratory chain. The immediate electron acceptor for the enzyme in this species is believed to be plastoquinone. Couples the redox reaction to proton translocation, and thus conserves the redox energy in a proton gradient. The protein is NAD(P)H-quinone oxidoreductase subunit 1, chloroplastic of Olimarabidopsis pumila (Dwarf rocket).